The following is a 476-amino-acid chain: MVADIAYLQQSQQEINQLEALFARQRAAYLAQPMPDATQRVQWLKALRDLLFKEQQALIEAIDRDFSARSADETLLAEIMPSLHGIHYAAKRVKKWMKPARRAVGLQFQPASAQVVYQPLGVVGVIVPWNYPLFLSIGPLTGALAAGNRVMIKMSESTPATGRLLKDLLARIFPEDQVAVVLGEVDVGVAFSKLPFDHLLFTGATSVGKHVMRAAAENLTPVTLELGGKSPAIVSDSVPMKDAAERIAFGKSLNAGQTCVAPDYVLVPSRRVEEFVSQYKEVVQGFFPRLSDNPDYTAIINERQLGRLRGYLDDAREKGATLVPLFAEGQQRRLPQTLLLNVSDDMKVMQEEIFGPLLPVIPYERLEDALAYVNQRPRPLALYYFGYDKAQQQRVLHETHSGGVCLNDTLLHVAQDDIPFGGVGPSGMGHYHGHEGFLTFSKAKGVFSKPRFNAARMIYPPYGKSIQKLVYKLFVR.

Active-site residues include Glu225 and Cys259.

The protein belongs to the aldehyde dehydrogenase family. Homodimer.

It catalyses the reaction (E)-coniferaldehyde + NADP(+) + H2O = (E)-ferulate + NADPH + 2 H(+). It carries out the reaction (E)-coniferaldehyde + NAD(+) + H2O = (E)-ferulate + NADH + 2 H(+). The sequence is that of Probable coniferyl aldehyde dehydrogenase (calB) from Pseudomonas aeruginosa (strain ATCC 15692 / DSM 22644 / CIP 104116 / JCM 14847 / LMG 12228 / 1C / PRS 101 / PAO1).